A 158-amino-acid chain; its full sequence is Phosphopantetheine adenylyltransferase (158 aa).

Residue threonine 10 participates in substrate binding. Residues 10-11 and histidine 18 contribute to the ATP site; that span reads TF. Substrate-binding residues include lysine 42, leucine 74, and arginine 88. ATP contacts are provided by residues 89–91, glutamate 99, and 124–130; these read GIR and WRYLSST.

It belongs to the bacterial CoaD family. In terms of assembly, homohexamer. It depends on Mg(2+) as a cofactor.

It localises to the cytoplasm. The enzyme catalyses (R)-4'-phosphopantetheine + ATP + H(+) = 3'-dephospho-CoA + diphosphate. It functions in the pathway cofactor biosynthesis; coenzyme A biosynthesis; CoA from (R)-pantothenate: step 4/5. Its function is as follows. Reversibly transfers an adenylyl group from ATP to 4'-phosphopantetheine, yielding dephospho-CoA (dPCoA) and pyrophosphate. The sequence is that of Phosphopantetheine adenylyltransferase from Actinobacillus pleuropneumoniae serotype 7 (strain AP76).